A 178-amino-acid chain; its full sequence is Ribosome maturation factor RimM (178 aa).

Positions 101 to 178 constitute a PRC barrel domain; that stretch reads ADEYYWYQLV…VMRVEWDADF (78 aa).

It belongs to the RimM family. Binds ribosomal protein uS19.

The protein localises to the cytoplasm. In terms of biological role, an accessory protein needed during the final step in the assembly of 30S ribosomal subunit, possibly for assembly of the head region. Essential for efficient processing of 16S rRNA. May be needed both before and after RbfA during the maturation of 16S rRNA. It has affinity for free ribosomal 30S subunits but not for 70S ribosomes. In Pseudomonas putida (strain ATCC 700007 / DSM 6899 / JCM 31910 / BCRC 17059 / LMG 24140 / F1), this protein is Ribosome maturation factor RimM.